Here is an 85-residue protein sequence, read N- to C-terminus: Cell division protein ZapA (85 aa).

A coiled-coil region spans residues 59–85 (TAVNVVHDYMKLQEKYEILERQLKEKE).

It belongs to the ZapA family. Type 2 subfamily. In terms of assembly, homodimer. Interacts with FtsZ.

Its subcellular location is the cytoplasm. In terms of biological role, activator of cell division through the inhibition of FtsZ GTPase activity, therefore promoting FtsZ assembly into bundles of protofilaments necessary for the formation of the division Z ring. It is recruited early at mid-cell but it is not essential for cell division. This chain is Cell division protein ZapA, found in Bacillus velezensis (strain DSM 23117 / BGSC 10A6 / LMG 26770 / FZB42) (Bacillus amyloliquefaciens subsp. plantarum).